Reading from the N-terminus, the 207-residue chain is uncharacterized protein (207 aa).

Active-site charge relay system residues include serine 119 and histidine 160.

Belongs to the peptidase S51 family.

This is an uncharacterized protein from Pasteurella multocida (strain Pm70).